A 288-amino-acid chain; its full sequence is Pyridoxal kinase PdxY (288 aa).

Residues Ser-9 and 44-45 (TQ) each bind substrate. ATP-binding residues include Asp-111, Glu-148, and Lys-181. Substrate is bound at residue Asp-224.

Belongs to the pyridoxine kinase family. PdxY subfamily. Homodimer. It depends on Mg(2+) as a cofactor.

The enzyme catalyses pyridoxal + ATP = pyridoxal 5'-phosphate + ADP + H(+). Its pathway is cofactor metabolism; pyridoxal 5'-phosphate salvage; pyridoxal 5'-phosphate from pyridoxal: step 1/1. Pyridoxal kinase involved in the salvage pathway of pyridoxal 5'-phosphate (PLP). Catalyzes the phosphorylation of pyridoxal to PLP. The sequence is that of Pyridoxal kinase PdxY from Haemophilus influenzae (strain ATCC 51907 / DSM 11121 / KW20 / Rd).